A 351-amino-acid polypeptide reads, in one-letter code: Ion-translocating oxidoreductase complex subunit D (351 aa).

4 helical membrane passes run 20-40 (IMLL…YFFG), 44-64 (LIQV…TLSL), 89-109 (LPPL…IIIA), and 123-143 (PAMI…TSWL). Threonine 187 is modified (FMN phosphoryl threonine). 5 consecutive transmembrane segments (helical) span residues 215 to 235 (LSGI…LFLL), 244 to 264 (IPVS…VIAP), 267 to 287 (FAPP…FFIA), 301 to 321 (LIFG…GGYP), and 322 to 342 (DGVA…DYYT).

It belongs to the NqrB/RnfD family. As to quaternary structure, the complex is composed of six subunits: RnfA, RnfB, RnfC, RnfD, RnfE and RnfG. FMN serves as cofactor.

It is found in the cell inner membrane. In terms of biological role, part of a membrane-bound complex that couples electron transfer with translocation of ions across the membrane. The protein is Ion-translocating oxidoreductase complex subunit D of Pectobacterium carotovorum subsp. carotovorum (strain PC1).